Consider the following 347-residue polypeptide: MSPYVLTIMSFSLLLGTTMTLISNHWLTAWMGLEINTLAIIPLMTKPHHPRSMESAIKYFMIQATASMIILFSAIFNASTTNQWMTGQISNTSASFMMTIALAMKLGLAPFHFWVPEVTQGIPLLSGMLLLTWQKIAPISIFYQISPSLNMSLLMILSITSTLLGGWGGLNQTQLRKILAYSSIAHMGWMAIIIMIYPSLTILNLILYLASTITMFMVLNQSSSTKINSLSILWNKSAPNMIIITLTLLSLGGLPPLTGFMPKWLILQELINFNNIPLAMMLALSTLLNLFFYMRIIYSSTLTMFPSINNTKMQWTLYSHKTISPIPTLTIISSLLLPMTPVFITLS.

11 helical membrane passes run serine 2–isoleucine 22, histidine 25–threonine 45, alanine 56–phenylalanine 76, phenylalanine 96–proline 116, isoleucine 122–phenylalanine 142, leucine 149–glycine 169, isoleucine 178–tyrosine 197, isoleucine 202–leucine 219, methionine 241–methionine 261, leucine 278–tyrosine 298, and isoleucine 326–leucine 346.

Belongs to the complex I subunit 2 family.

The protein localises to the mitochondrion inner membrane. It carries out the reaction a ubiquinone + NADH + 5 H(+)(in) = a ubiquinol + NAD(+) + 4 H(+)(out). Its function is as follows. Core subunit of the mitochondrial membrane respiratory chain NADH dehydrogenase (Complex I) that is believed to belong to the minimal assembly required for catalysis. Complex I functions in the transfer of electrons from NADH to the respiratory chain. The immediate electron acceptor for the enzyme is believed to be ubiquinone. This chain is NADH-ubiquinone oxidoreductase chain 2 (MT-ND2), found in Didelphis virginiana (North American opossum).